The following is a 307-amino-acid chain: Glutaminase (307 aa).

The substrate site is built by S66, N116, E160, N167, Y191, Y243, and V261.

It belongs to the glutaminase family. In terms of assembly, homotetramer.

The enzyme catalyses L-glutamine + H2O = L-glutamate + NH4(+). The polypeptide is Glutaminase (Pseudoalteromonas translucida (strain TAC 125)).